A 723-amino-acid chain; its full sequence is ATP-dependent zinc metalloprotease YME1 homolog (723 aa).

Residues 198–220 (LTRFYIFLVFCIFFGYLTGRIRV) form a helical membrane-spanning segment. 288–295 (GPPGTGKT) serves as a coordination point for ATP. Zn(2+) is bound at residue H509. E510 is a catalytic residue. 2 residues coordinate Zn(2+): H513 and D587.

In the N-terminal section; belongs to the AAA ATPase family. This sequence in the C-terminal section; belongs to the peptidase M41 family. The cofactor is Zn(2+).

The protein resides in the mitochondrion inner membrane. It is found in the mitochondrion. Functionally, ATP-dependent metalloprotease that catalyzes the degradation of folded and unfolded proteins with a suitable degron sequence in the mitochondrial intermembrane region. Plays an important role in regulating mitochondrial morphology and function. In Caenorhabditis elegans, this protein is ATP-dependent zinc metalloprotease YME1 homolog (ymel-1).